The sequence spans 473 residues: 3-isopropylmalate dehydratase large subunit (473 aa).

3 residues coordinate [4Fe-4S] cluster: Cys351, Cys414, and Cys417.

The protein belongs to the aconitase/IPM isomerase family. LeuC type 1 subfamily. Heterodimer of LeuC and LeuD. [4Fe-4S] cluster serves as cofactor.

It carries out the reaction (2R,3S)-3-isopropylmalate = (2S)-2-isopropylmalate. It functions in the pathway amino-acid biosynthesis; L-leucine biosynthesis; L-leucine from 3-methyl-2-oxobutanoate: step 2/4. Its function is as follows. Catalyzes the isomerization between 2-isopropylmalate and 3-isopropylmalate, via the formation of 2-isopropylmaleate. The sequence is that of 3-isopropylmalate dehydratase large subunit from Acidovorax ebreus (strain TPSY) (Diaphorobacter sp. (strain TPSY)).